Here is a 32-residue protein sequence, read N- to C-terminus: Zinc metalloproteinase/disintegrin-like CdtV1 (32 aa).

Intrachain disulfides connect Cys-5–Cys-14 and Cys-7–Cys-15.

The protein belongs to the venom metalloproteinase (M12B) family. P-II subfamily. P-IIa sub-subfamily. Monomer. As to expression, expressed by the venom gland.

The protein resides in the secreted. Functionally, snake venom metalloproteinase that impairs hemostasis in the envenomed animal. In Crotalus durissus terrificus (South American rattlesnake), this protein is Zinc metalloproteinase/disintegrin-like CdtV1.